The chain runs to 761 residues: Isocyanide synthase xanB (761 aa).

The tract at residues 24–128 is disordered; it reads LLGSYETKAP…GKGTKADPSH (105 aa). Residues 36-48 show a composition bias toward low complexity; it reads ETSEIAASSSSSE. The segment covering 93-102 has biased composition (polar residues); sequence TVSTPQSSDN. Residues 115 to 126 are compositionally biased toward basic and acidic residues; it reads FKDEGKGTKADP.

This sequence belongs to the isocyanide synthase family.

The protein operates within secondary metabolite biosynthesis. Isocyanide synthase; part of the gene cluster that mediates the biosynthesis of the isocyanide xanthocillin and its derivatives. The first step of the pathway consists in the conversion of tyrosine into a vinyl-isonitrile intermediate by the isocyanide synthase xanB. Subsequent oxidative dimerization of this intermediate to form xanthocillin may involve the cytochrome P450 monooxygenase xanG, whose expression is coregulated with that of XanB. Xanthocillin can be further modified by the isonitrile hydratase-like protein xanA which introduces N-formyl groups and the methyltransferase xanE which introduces methyl groups, leading to the production of several derivatives including fumiformamide. Finally, fumiformamide can be subject to both oxidative and reductive cyclization to yield melanocins E and F, respectively. This is Isocyanide synthase xanB from Aspergillus fumigatus (strain ATCC MYA-4609 / CBS 101355 / FGSC A1100 / Af293) (Neosartorya fumigata).